Consider the following 714-residue polypeptide: Fatty acid oxidation complex subunit alpha (714 aa).

Positions 1-190 (MEMASAFTLN…KLGLVDDVVP (190 aa)) are enoyl-CoA hydratase. The segment at 306–714 (APLNSVGILG…FWKTTATDLQ (409 aa)) is 3-hydroxyacyl-CoA dehydrogenase.

In the N-terminal section; belongs to the enoyl-CoA hydratase/isomerase family. The protein in the central section; belongs to the 3-hydroxyacyl-CoA dehydrogenase family. In terms of assembly, heterotetramer of two alpha chains (FadJ) and two beta chains (FadI).

The protein localises to the cytoplasm. It catalyses the reaction a (3S)-3-hydroxyacyl-CoA = a (2E)-enoyl-CoA + H2O. It carries out the reaction a 4-saturated-(3S)-3-hydroxyacyl-CoA = a (3E)-enoyl-CoA + H2O. The enzyme catalyses a (3S)-3-hydroxyacyl-CoA + NAD(+) = a 3-oxoacyl-CoA + NADH + H(+). The catalysed reaction is (3S)-3-hydroxybutanoyl-CoA = (3R)-3-hydroxybutanoyl-CoA. The protein operates within lipid metabolism; fatty acid beta-oxidation. Functionally, catalyzes the formation of a hydroxyacyl-CoA by addition of water on enoyl-CoA. Also exhibits 3-hydroxyacyl-CoA epimerase and 3-hydroxyacyl-CoA dehydrogenase activities. This chain is Fatty acid oxidation complex subunit alpha, found in Escherichia coli O6:H1 (strain CFT073 / ATCC 700928 / UPEC).